Here is a 110-residue protein sequence, read N- to C-terminus: Antimicrobial peptide microplusin (110 aa).

The signal sequence occupies residues 1-20; it reads MKAIFVSALLVVALVASTSA. Intrachain disulfides connect Cys26-Cys72, Cys39-Cys100, and Cys61-Cys66.

In terms of tissue distribution, expressed in the hemocytes, fat body and ovaries.

The protein resides in the secreted. In terms of biological role, has bacteriostatic activity against the Gram-positive bacterium M.luteus, but not against Gram-negative bacterium E.coli SBS363. Has fungistatic activity against C.neoformans, but not C.albicans. Binds and sequesters copper and iron ions. Copper-chelating is crucial for antimicrobial activity against M.luteus. This is Antimicrobial peptide microplusin from Rhipicephalus microplus (Cattle tick).